Consider the following 937-residue polypeptide: MIFPIGIPMISKKRKSAQEAVSLREAAERRSQFARVPARSVSAPPRKKWFRSKQQLSGAADGMDGSSRAGSQEIVCDEFTKKLVAAITTWHDIHSSLLQLSIERSSNDSNEEHENVSVSSESSWSSASDSESDEDSATGRDSTNNHLSASAARFSISNPDLTNCQIKQMFPEMADHWRKALAKSPVVRRTAADQETSNPVNKHRSSRYWIEDEGDYHILPSEHVWLPSSTGSSASADSECYVGEKDCRRSGEKRRCAACHIVAHTNCFSLLAKLNLNCKTTFRDYATKKTPSKESTDGLTAHHWVHKWRHEGRCNTCAKSFQQKMFFQGKEKKETIAVTCSWCKESYHLKNCFARDKLEERCNRGALKEMIVPPTWILRLANRKRSSRTPSHPRKHKKSHRQFVVKPTDLWSSGPSQPLLVFVNPKSGGNKGSKALHTLCWLLNPRQVFDITSLKGPKFGLEMFRKVVTQLRILVCGGDGTVGWVLSTLDNLNWPAYPPMAIMPLGTGNDLARCMGWGGVFSDEPISQLMQAILHETIVTHLDRWRIDVEPNTSCNLEEEDDGMQSALPLTVMTNYFSIGADAHVALQFHHSRSANPQMLNSRLKNRIAYGGLGTIDLFKRSWKDLCEYITLECDGVDVTPRIKELKLHCILFHNITYYAGGTIPWGESSDNKPSCCDGKVEVLGFTTATLAALQMGGKGERIAQCSRVRVITNKAIPMQVDGEPCLLAPSIITLGFHSKVPMLKREKKTPCTPNLMRRGTRYGQKDSQVQSTSLIIQLPVIVVGRADYDNYKDCFERLKDTAYEIGIVNVESEAELDSARVLIQRLLVEHNSLPYEPDKNWRFLDYVSNAEEGTFRVSRQQEHVQSVSDVCNTDECLLILDHAFPSITDREAVELFQPQQPIPSTSTSAAPRYHNSRRISETLRIVLSSDAQETHL.

Disordered regions lie at residues 44 to 69 (PPRK…SSRA) and 106 to 145 (SNDS…STNN). Low complexity predominate over residues 116-129 (VSVSSESSWSSASD). The DAGKc domain occupies 414-551 (GPSQPLLVFV…LDRWRIDVEP (138 aa)).

This sequence belongs to the eukaryotic diacylglycerol kinase family.

The catalysed reaction is a 1,2-diacyl-sn-glycerol + ATP = a 1,2-diacyl-sn-glycero-3-phosphate + ADP + H(+). The protein is Putative diacylglycerol kinase K06A1.6 (dgk-5) of Caenorhabditis elegans.